A 90-amino-acid polypeptide reads, in one-letter code: Probable Fe(2+)-trafficking protein (90 aa).

It belongs to the Fe(2+)-trafficking protein family.

Could be a mediator in iron transactions between iron acquisition and iron-requiring processes, such as synthesis and/or repair of Fe-S clusters in biosynthetic enzymes. This is Probable Fe(2+)-trafficking protein from Pseudomonas fluorescens (strain ATCC BAA-477 / NRRL B-23932 / Pf-5).